A 443-amino-acid chain; its full sequence is Differentially expressed in FDCP 8 homolog B (443 aa).

Residues 14 to 49 are disordered; it reads HLNPFDKKGGAERHPADSETQPCKDSSTSSPLSVPE. Residues 17–30 are compositionally biased toward basic and acidic residues; that stretch reads PFDKKGGAERHPAD. The segment covering 31 to 45 has biased composition (polar residues); sequence SETQPCKDSSTSSPL. 2 Phorbol-ester/DAG-type zinc fingers span residues 134-185 and 364-424; these read EHRF…TKPC and IHTT…STSC.

Belongs to the DEF8 family.

Positively regulates lysosome peripheral distribution and ruffled border formation in osteoclasts. Involved in bone resorption. In Xenopus laevis (African clawed frog), this protein is Differentially expressed in FDCP 8 homolog B (def8-b).